The primary structure comprises 76 residues: Exodeoxyribonuclease 7 small subunit (76 aa).

It belongs to the XseB family. As to quaternary structure, heterooligomer composed of large and small subunits.

The protein localises to the cytoplasm. The enzyme catalyses Exonucleolytic cleavage in either 5'- to 3'- or 3'- to 5'-direction to yield nucleoside 5'-phosphates.. Its function is as follows. Bidirectionally degrades single-stranded DNA into large acid-insoluble oligonucleotides, which are then degraded further into small acid-soluble oligonucleotides. The chain is Exodeoxyribonuclease 7 small subunit from Latilactobacillus sakei subsp. sakei (strain 23K) (Lactobacillus sakei subsp. sakei).